Here is a 711-residue protein sequence, read N- to C-terminus: DNA ligase (711 aa).

A disordered region spans residues M1–R29. Residues A12–A25 are compositionally biased toward low complexity. NAD(+) contacts are provided by residues D54 to D58, S103 to L104, and E133. K135 (N6-AMP-lysine intermediate) is an active-site residue. NAD(+) contacts are provided by R156, E197, K313, and K337. Positions 431, 434, 450, and 456 each coordinate Zn(2+). The BRCT domain occupies Q620 to V709.

It belongs to the NAD-dependent DNA ligase family. LigA subfamily. The cofactor is Mg(2+). Requires Mn(2+) as cofactor.

The enzyme catalyses NAD(+) + (deoxyribonucleotide)n-3'-hydroxyl + 5'-phospho-(deoxyribonucleotide)m = (deoxyribonucleotide)n+m + AMP + beta-nicotinamide D-nucleotide.. In terms of biological role, DNA ligase that catalyzes the formation of phosphodiester linkages between 5'-phosphoryl and 3'-hydroxyl groups in double-stranded DNA using NAD as a coenzyme and as the energy source for the reaction. It is essential for DNA replication and repair of damaged DNA. In Salinispora tropica (strain ATCC BAA-916 / DSM 44818 / JCM 13857 / NBRC 105044 / CNB-440), this protein is DNA ligase.